Here is a 407-residue protein sequence, read N- to C-terminus: 4-hydroxy-3-methylbut-2-en-1-yl diphosphate synthase (flavodoxin) (407 aa).

[4Fe-4S] cluster contacts are provided by cysteine 296, cysteine 299, cysteine 342, and glutamate 349.

The protein belongs to the IspG family. The cofactor is [4Fe-4S] cluster.

It catalyses the reaction (2E)-4-hydroxy-3-methylbut-2-enyl diphosphate + oxidized [flavodoxin] + H2O + 2 H(+) = 2-C-methyl-D-erythritol 2,4-cyclic diphosphate + reduced [flavodoxin]. It participates in isoprenoid biosynthesis; isopentenyl diphosphate biosynthesis via DXP pathway; isopentenyl diphosphate from 1-deoxy-D-xylulose 5-phosphate: step 5/6. In terms of biological role, converts 2C-methyl-D-erythritol 2,4-cyclodiphosphate (ME-2,4cPP) into 1-hydroxy-2-methyl-2-(E)-butenyl 4-diphosphate. The polypeptide is 4-hydroxy-3-methylbut-2-en-1-yl diphosphate synthase (flavodoxin) (Methylococcus capsulatus (strain ATCC 33009 / NCIMB 11132 / Bath)).